Here is a 771-residue protein sequence, read N- to C-terminus: Solute carrier family 7 member 14 (771 aa).

The next 6 helical transmembrane spans lie at 58 to 78, 83 to 103, 119 to 141, 187 to 207, 216 to 236, and 251 to 271; these read LISL…SGLV, AGPG…LSGV, AYTY…NLIL, YPDL…ALGV, VLNV…LFFI, and WSGV…FDII. A glycan (N-linked (GlcNAc...) asparagine) is linked at N282. A run of 4 helical transmembrane segments spans residues 291–311, 336–356, 384–404, and 407–427; these read ASLV…TLMV, FVVA…SLFP, PVVA…LVSL, and LIEM…VCVL. Residues S465, S468, S475, and S488 each carry the phosphoserine modification. A run of 4 helical transmembrane segments spans residues 565 to 585, 596 to 616, 628 to 648, and 655 to 675; these read VTIC…FIIF, WAIL…FVIL, MAPC…YLML, and WIRF…YGIW. N676 carries N-linked (GlcNAc...) asparagine glycosylation. A disordered region spans residues 735 to 771; the sequence is SDAKANSRTSSKAKSKSKHKQNSEALIANDELDCSPE. Over residues 745 to 754 the composition is skewed to basic residues; it reads SKAKSKSKHK. A phosphoserine mark is found at S757 and S769.

It belongs to the amino acid-polyamine-organocation (APC) superfamily. As to expression, expressed in retina, brain and spinal cord. In the retina, expressed in the inner nuclear layer and photoreceptor layer (at protein level). Expressed in liver, spleen, lung, kidney intestine and brain (at protein level).

The protein resides in the lysosome membrane. It carries out the reaction 4-aminobutanoate(in) = 4-aminobutanoate(out). Imports 4-aminobutanoate (GABA) into lysosomes. May act as a GABA sensor that regulates mTORC2-dependent INS signaling and gluconeogenesis. The transport mechanism and substrate selectivity remain to be elucidated. In Mus musculus (Mouse), this protein is Solute carrier family 7 member 14.